The following is a 438-amino-acid chain: MRVEEFLKQKGIEVGDYVRIIKVEDGEKVEYEGIVMPPYELSEGDTVVIKLDNGYNIGIAIEKIQEINVIEKAKAKPEVHFKAELEPRKELPTITILGTGGTIASRIDYETGAVYPAFTAEELAKAVPEIFEIANIKPKLLFNIFSEDMKPKHWIEIAHETAKALNSGNEGVVIAHGTDTMGYTAAALSFMLRNLTKPVVLVGAQRSSDRPSSDAAMNLICATRMAVSDAAEVMVVMHGETSDTYCLAHRGTKVRKMHTSRRDAFRSINDIPIAKIWSDGKIEFLRDDYRKRSEGEVWVDDKLEEKVALVKVYPGMSAELIDFLVDKGYKGIVIEGTGLGHTPSDLIPSIKRAVDEGVAVCMTSQCLYGRVNLNVYATGRKLLKAGVIPCEDMLPETAYVKLMWVLGHTNDLREAKKMMLTNYAGEITPYTKPNTFLI.

The Asparaginase/glutaminase domain occupies 92 to 422; that stretch reads PTITILGTGG…REAKKMMLTN (331 aa). Residues T102, T178, D179, and K256 contribute to the active site.

This sequence belongs to the asparaginase 1 family. GatD subfamily. Heterodimer of GatD and GatE.

It carries out the reaction L-glutamyl-tRNA(Gln) + L-glutamine + ATP + H2O = L-glutaminyl-tRNA(Gln) + L-glutamate + ADP + phosphate + H(+). Allows the formation of correctly charged Gln-tRNA(Gln) through the transamidation of misacylated Glu-tRNA(Gln) in organisms which lack glutaminyl-tRNA synthetase. The reaction takes place in the presence of glutamine and ATP through an activated gamma-phospho-Glu-tRNA(Gln). The GatDE system is specific for glutamate and does not act on aspartate. The chain is Glutamyl-tRNA(Gln) amidotransferase subunit D from Pyrococcus furiosus (strain ATCC 43587 / DSM 3638 / JCM 8422 / Vc1).